The following is a 127-amino-acid chain: Glycine cleavage system H protein (127 aa).

A Lipoyl-binding domain is found at 24–105 (TLTIGITDLA…AYDAWLFKIK (82 aa)). K65 bears the N6-lipoyllysine mark.

The protein belongs to the GcvH family. As to quaternary structure, the glycine cleavage system is composed of four proteins: P, T, L and H. (R)-lipoate is required as a cofactor.

Its function is as follows. The glycine cleavage system catalyzes the degradation of glycine. The H protein shuttles the methylamine group of glycine from the P protein to the T protein. This is Glycine cleavage system H protein from Ralstonia nicotianae (strain ATCC BAA-1114 / GMI1000) (Ralstonia solanacearum).